Here is a 160-residue protein sequence, read N- to C-terminus: Cytochrome b6-f complex subunit 4 (160 aa).

3 consecutive transmembrane segments (helical) span residues 36–56 (LLYI…GLAV), 95–115 (LLGV…PFLE), and 131–151 (TVFL…TLPI).

It belongs to the cytochrome b family. PetD subfamily. The 4 large subunits of the cytochrome b6-f complex are cytochrome b6, subunit IV (17 kDa polypeptide, petD), cytochrome f and the Rieske protein, while the 4 small subunits are petG, petL, petM and petN. The complex functions as a dimer.

It localises to the plastid. The protein localises to the chloroplast thylakoid membrane. Component of the cytochrome b6-f complex, which mediates electron transfer between photosystem II (PSII) and photosystem I (PSI), cyclic electron flow around PSI, and state transitions. The polypeptide is Cytochrome b6-f complex subunit 4 (Solanum bulbocastanum (Wild potato)).